A 603-amino-acid chain; its full sequence is Elongation factor 4 (603 aa).

The region spanning 7–189 is the tr-type G domain; that stretch reads SRIRNFSIIA…SIVQLVPPPQ (183 aa). GTP is bound by residues 19–24 and 136–139; these read DHGKST and NKID.

The protein belongs to the TRAFAC class translation factor GTPase superfamily. Classic translation factor GTPase family. LepA subfamily.

It localises to the cell inner membrane. The enzyme catalyses GTP + H2O = GDP + phosphate + H(+). Functionally, required for accurate and efficient protein synthesis under certain stress conditions. May act as a fidelity factor of the translation reaction, by catalyzing a one-codon backward translocation of tRNAs on improperly translocated ribosomes. Back-translocation proceeds from a post-translocation (POST) complex to a pre-translocation (PRE) complex, thus giving elongation factor G a second chance to translocate the tRNAs correctly. Binds to ribosomes in a GTP-dependent manner. The protein is Elongation factor 4 of Microcystis aeruginosa (strain NIES-843 / IAM M-2473).